Consider the following 334-residue polypeptide: Isopentenyl-diphosphate delta-isomerase (334 aa).

5–6 contacts substrate; sequence RK. FMN-binding positions include 60 to 62, serine 90, and asparagine 117; that span reads AMT. Residue glutamine 147 participates in substrate binding. Glutamate 148 contributes to the Mg(2+) binding site. FMN-binding positions include lysine 179, serine 204, threonine 209, 253–255, and 274–275; these read GVR and SR.

This sequence belongs to the IPP isomerase type 2 family. Homooctamer. Dimer of tetramers. FMN serves as cofactor. NADPH is required as a cofactor. Requires Mg(2+) as cofactor.

It is found in the cytoplasm. It catalyses the reaction isopentenyl diphosphate = dimethylallyl diphosphate. Functionally, involved in the biosynthesis of isoprenoids. Catalyzes the 1,3-allylic rearrangement of the homoallylic substrate isopentenyl (IPP) to its allylic isomer, dimethylallyl diphosphate (DMAPP). This Streptococcus gordonii (strain Challis / ATCC 35105 / BCRC 15272 / CH1 / DL1 / V288) protein is Isopentenyl-diphosphate delta-isomerase.